Consider the following 178-residue polypeptide: Dual-action ribosomal maturation protein DarP (178 aa).

The protein belongs to the DarP family.

The protein localises to the cytoplasm. In terms of biological role, member of a network of 50S ribosomal subunit biogenesis factors which assembles along the 30S-50S interface, preventing incorrect 23S rRNA structures from forming. Promotes peptidyl transferase center (PTC) maturation. This is Dual-action ribosomal maturation protein DarP from Haemophilus influenzae (strain 86-028NP).